The chain runs to 520 residues: GMP synthase [glutamine-hydrolyzing] (520 aa).

In terms of domain architecture, Glutamine amidotransferase type-1 spans 12–205 (KIIVLDYGSQ…AISICGARGD (194 aa)). The active-site Nucleophile is the Cys-89. Residues His-179 and Glu-181 contribute to the active site. One can recognise a GMPS ATP-PPase domain in the interval 206–395 (WSMDNFIDME…LGMPDEVVWR (190 aa)). 233–239 (SGGVDSS) is an ATP binding site.

In terms of assembly, homodimer.

It catalyses the reaction XMP + L-glutamine + ATP + H2O = GMP + L-glutamate + AMP + diphosphate + 2 H(+). Its pathway is purine metabolism; GMP biosynthesis; GMP from XMP (L-Gln route): step 1/1. Functionally, catalyzes the synthesis of GMP from XMP. The polypeptide is GMP synthase [glutamine-hydrolyzing] (Streptococcus equi subsp. zooepidemicus (strain H70)).